Consider the following 61-residue polypeptide: UPF0434 protein PSPA7_2181 (61 aa).

It belongs to the UPF0434 family.

This Pseudomonas paraeruginosa (strain DSM 24068 / PA7) (Pseudomonas aeruginosa (strain PA7)) protein is UPF0434 protein PSPA7_2181.